Consider the following 493-residue polypeptide: 3-octaprenyl-4-hydroxybenzoate carboxy-lyase (493 aa).

Position 172 (asparagine 172) interacts with Mn(2+). Residues 175 to 177, 189 to 191, and 194 to 195 contribute to the prenylated FMN site; these read IYR, RWL, and RG. Glutamate 238 contributes to the Mn(2+) binding site. Catalysis depends on aspartate 287, which acts as the Proton donor.

It belongs to the UbiD family. Homohexamer. Prenylated FMN serves as cofactor. Requires Mn(2+) as cofactor.

The protein resides in the cell membrane. The enzyme catalyses a 4-hydroxy-3-(all-trans-polyprenyl)benzoate + H(+) = a 2-(all-trans-polyprenyl)phenol + CO2. It functions in the pathway cofactor biosynthesis; ubiquinone biosynthesis. Its function is as follows. Catalyzes the decarboxylation of 3-octaprenyl-4-hydroxy benzoate to 2-octaprenylphenol, an intermediate step in ubiquinone biosynthesis. In Shewanella putrefaciens (strain CN-32 / ATCC BAA-453), this protein is 3-octaprenyl-4-hydroxybenzoate carboxy-lyase.